The following is a 398-amino-acid chain: MDTKAFKRALHQSDRYNRKGFGKTTDVSGALESAYQSDLIQSLRQNGYRLQRGEITIRLAEAFGFCWGVERAVAIAYETRQHFPQERIWITNEIIHNPSVNQHLREMSVEFIPCERGEKDFSVVDRGDVVILPAFGASVQEMQLLDEKGCHIVDTTCPWVSKVWNTVEKHKRGAHTSIIHGKYNHEETVATSSFAETYLVVLNLEQAQYVCDYILNGGDRDEFMTRFGKACSAGFDPDRDLERIGIANQTTMLKSETEAIGKLFERTLLKKYGPQALNDHFLAFNTICDATQERQDAMFQLVEEPLDLIVVIGGFNSSNTTHLQEIAIERQIPSFHIDAAERIGPGNRIEHKPLHTDLTTTEPWLPAGPLTIGITSGASTPDKVVEDVIERLFDLQRS.

C66 contacts [4Fe-4S] cluster. H96 serves as a coordination point for (2E)-4-hydroxy-3-methylbut-2-enyl diphosphate. A dimethylallyl diphosphate-binding site is contributed by H96. H96 contacts isopentenyl diphosphate. C157 serves as a coordination point for [4Fe-4S] cluster. Residue H185 coordinates (2E)-4-hydroxy-3-methylbut-2-enyl diphosphate. Residue H185 coordinates dimethylallyl diphosphate. An isopentenyl diphosphate-binding site is contributed by H185. E187 (proton donor) is an active-site residue. (2E)-4-hydroxy-3-methylbut-2-enyl diphosphate is bound at residue T250. C288 provides a ligand contact to [4Fe-4S] cluster. Residues S317, S318, N319, and S379 each coordinate (2E)-4-hydroxy-3-methylbut-2-enyl diphosphate. Residues S317, S318, N319, and S379 each coordinate dimethylallyl diphosphate. Positions 317, 318, 319, and 379 each coordinate isopentenyl diphosphate.

It belongs to the IspH family. [4Fe-4S] cluster is required as a cofactor.

The catalysed reaction is isopentenyl diphosphate + 2 oxidized [2Fe-2S]-[ferredoxin] + H2O = (2E)-4-hydroxy-3-methylbut-2-enyl diphosphate + 2 reduced [2Fe-2S]-[ferredoxin] + 2 H(+). It carries out the reaction dimethylallyl diphosphate + 2 oxidized [2Fe-2S]-[ferredoxin] + H2O = (2E)-4-hydroxy-3-methylbut-2-enyl diphosphate + 2 reduced [2Fe-2S]-[ferredoxin] + 2 H(+). The protein operates within isoprenoid biosynthesis; dimethylallyl diphosphate biosynthesis; dimethylallyl diphosphate from (2E)-4-hydroxy-3-methylbutenyl diphosphate: step 1/1. Its pathway is isoprenoid biosynthesis; isopentenyl diphosphate biosynthesis via DXP pathway; isopentenyl diphosphate from 1-deoxy-D-xylulose 5-phosphate: step 6/6. Catalyzes the conversion of 1-hydroxy-2-methyl-2-(E)-butenyl 4-diphosphate (HMBPP) into a mixture of isopentenyl diphosphate (IPP) and dimethylallyl diphosphate (DMAPP). Acts in the terminal step of the DOXP/MEP pathway for isoprenoid precursor biosynthesis. This chain is 4-hydroxy-3-methylbut-2-enyl diphosphate reductase, found in Synechococcus sp. (strain ATCC 27144 / PCC 6301 / SAUG 1402/1) (Anacystis nidulans).